The chain runs to 602 residues: Type 2 DNA topoisomerase 6 subunit B (602 aa).

Residues asparagine 40, aspartate 71, 92 to 93, 102 to 109, and lysine 425 each bind ATP; these read SR and GQQGIGIS.

Belongs to the TOP6B family. Homodimer. Heterotetramer of two Top6A and two Top6B chains.

The enzyme catalyses ATP-dependent breakage, passage and rejoining of double-stranded DNA.. In terms of biological role, relaxes both positive and negative superturns and exhibits a strong decatenase activity. This chain is Type 2 DNA topoisomerase 6 subunit B, found in Archaeoglobus fulgidus (strain ATCC 49558 / DSM 4304 / JCM 9628 / NBRC 100126 / VC-16).